Here is a 721-residue protein sequence, read N- to C-terminus: BRCA1-A complex subunit RAP80 (721 aa).

Positions 1–65 (MPRRKKKGKE…GLQKTKIKQS (65 aa)) are disordered. A necessary for transcriptional repression region spans residues 1–101 (MPRRKKKGKE…SEQEAREVNS (101 aa)). Residue Lys20 forms a Glycyl lysine isopeptide (Lys-Gly) (interchain with G-Cter in SUMO2) linkage. The residue at position 29 (Ser29) is a Phosphoserine. Residue Lys31 forms a Glycyl lysine isopeptide (Lys-Gly) (interchain with G-Cter in SUMO2) linkage. Residues Ser44 and Ser46 each carry the phosphoserine modification. The short motif at 60 to 78 (TKIKQSSRAKCLAKRKIAQ) is the LR motif element. Residues Lys75 and Lys90 each participate in a glycyl lysine isopeptide (Lys-Gly) (interchain with G-Cter in SUMO2) cross-link. The 20-residue stretch at 80-99 (TEEEQFALALKMSEQEAREV) folds into the UIM 1 domain. Residues 93–204 (EQEAREVNSQ…SVSSGSWDQS (112 aa)) are disordered. The interval 97–103 (REVNSQE) is UIM-linker. Residues 100–200 (NSQEEEEEEL…EEPVSVSSGS (101 aa)) are necessary for interaction with NR6A1 N-terminus. Phosphoserine is present on Ser101. The UIM 2 domain occupies 105–124 (EEEELLRKAIAESLNSCRPS). Residues 117 to 130 (SLNSCRPSDASATR) show a composition bias toward polar residues. The residue at position 140 (Ser140) is a Phosphoserine. The span at 194–204 (VSVSSGSWDQS) shows a compositional bias: low complexity. At Ser205 the chain carries Phosphoserine. Lys245 is covalently cross-linked (Glycyl lysine isopeptide (Lys-Gly) (interchain with G-Cter in SUMO2)). The tract at residues 270 to 400 (TGGTVNYFWG…EEEPTTSHGQ (131 aa)) is AIR. Positions 334–369 (NECGQGEQASEKNEGISEDMGDEDKEERQESRASVW) are disordered. The segment covering 349–358 (ISEDMGDEDK) has biased composition (acidic residues). Residues Lys382 and Lys387 each participate in a glycyl lysine isopeptide (Lys-Gly) (interchain with G-Cter in SUMO2) cross-link. The disordered stretch occupies residues 391–418 (EEEPTTSHGQSSQGLFVEETSEEGNSVP). Residues 400–500 (QSSQGLFVEE…EIHTSTFSSS (101 aa)) form a necessary for interaction with NR6A1 C-terminus region. A phosphoserine mark is found at Ser402 and Ser420. Lys429 participates in a covalent cross-link: Glycyl lysine isopeptide (Lys-Gly) (interchain with G-Cter in SUMO2). Residue Ser467 is modified to Phosphoserine. The segment at 502-529 (QVSCPLCDQGFPPTKIERHAMYCNGLMG) adopts a UBZ4-type zinc-finger fold. 4 residues coordinate Zn(2+): Cys505, Cys508, His520, and Cys524. Residues 505–582 (CPLCDQGFPP…REYQCHVESC (78 aa)) form a zinc-finger-like region region. Glycyl lysine isopeptide (Lys-Gly) (interchain with G-Cter in SUMO2) cross-links involve residues Lys544, Lys559, Lys562, and Lys607. Ser627 bears the Phosphoserine mark. Residues Lys635 and Lys642 each participate in a glycyl lysine isopeptide (Lys-Gly) (interchain with G-Cter in SUMO2) cross-link. Residues Ser655 and Ser679 each carry the phosphoserine modification. Glycyl lysine isopeptide (Lys-Gly) (interchain with G-Cter in SUMO2) cross-links involve residues Lys698 and Lys699.

Belongs to the RAP80 family. Component of the ARISC complex, at least composed of UIMC1/RAP80, ABRAXAS1, BRCC3/BRCC36, BABAM2 and BABAM1/NBA1. Component of the BRCA1-A complex, at least composed of the BRCA1, BARD1, UIMC1/RAP80, ABRAXAS1, BRCC3/BRCC36, BABAM2 and BABAM1/NBA1. In the BRCA1-A complex, interacts directly with ABRAXAS1. Interacts with UBE2I. Interacts with NR6A1. Interacts with ESR1. Interacts with TSP57. Interacts with TRAIP. Sumoylated. In terms of processing, phosphorylated upon DNA damage by ATM or ATR.

The protein resides in the nucleus. In terms of biological role, ubiquitin-binding protein. Specifically recognizes and binds 'Lys-63'-linked ubiquitin. Plays a central role in the BRCA1-A complex by specifically binding 'Lys-63'-linked ubiquitinated histones H2A and H2AX at DNA lesions sites, leading to target the BRCA1-BARD1 heterodimer to sites of DNA damage at double-strand breaks (DSBs). The BRCA1-A complex also possesses deubiquitinase activity that specifically removes 'Lys-63'-linked ubiquitin on histones H2A and H2AX. Also weakly binds monoubiquitin but with much less affinity than 'Lys-63'-linked ubiquitin. May interact with monoubiquitinated histones H2A and H2B; the relevance of such results is however unclear in vivo. Does not bind Lys-48'-linked ubiquitin. May indirectly act as a transcriptional repressor by inhibiting the interaction of NR6A1 with the corepressor NCOR1. In Sus scrofa (Pig), this protein is BRCA1-A complex subunit RAP80 (UIMC1).